A 249-amino-acid polypeptide reads, in one-letter code: Phosphonates import ATP-binding protein PhnC (249 aa).

Residues 2–246 enclose the ABC transporter domain; the sequence is IEFKKVEKVW…KLNESKLEEI (245 aa). 35 to 42 is an ATP binding site; that stretch reads GLSGAGKT.

It belongs to the ABC transporter superfamily. Phosphonates importer (TC 3.A.1.9.1) family. In terms of assembly, the complex is composed of two ATP-binding proteins (PhnC), two transmembrane proteins (PhnE) and a solute-binding protein (PhnD).

It is found in the cell membrane. The catalysed reaction is phosphonate(out) + ATP + H2O = phosphonate(in) + ADP + phosphate + H(+). Part of the ABC transporter complex PhnCDE involved in phosphonates import. Responsible for energy coupling to the transport system. The polypeptide is Phosphonates import ATP-binding protein PhnC (Mesoplasma florum (strain ATCC 33453 / NBRC 100688 / NCTC 11704 / L1) (Acholeplasma florum)).